The following is a 38-amino-acid chain: Large ribosomal subunit protein bL36 (38 aa).

The protein belongs to the bacterial ribosomal protein bL36 family.

In Fervidobacterium nodosum (strain ATCC 35602 / DSM 5306 / Rt17-B1), this protein is Large ribosomal subunit protein bL36.